Consider the following 176-residue polypeptide: Large ribosomal subunit protein uL6 (176 aa).

It belongs to the universal ribosomal protein uL6 family. As to quaternary structure, part of the 50S ribosomal subunit.

This protein binds to the 23S rRNA, and is important in its secondary structure. It is located near the subunit interface in the base of the L7/L12 stalk, and near the tRNA binding site of the peptidyltransferase center. The sequence is that of Large ribosomal subunit protein uL6 from Burkholderia vietnamiensis (strain G4 / LMG 22486) (Burkholderia cepacia (strain R1808)).